Reading from the N-terminus, the 89-residue chain is Small ribosomal subunit protein uS15 (89 aa).

This sequence belongs to the universal ribosomal protein uS15 family. In terms of assembly, part of the 30S ribosomal subunit. Forms a bridge to the 50S subunit in the 70S ribosome, contacting the 23S rRNA.

One of the primary rRNA binding proteins, it binds directly to 16S rRNA where it helps nucleate assembly of the platform of the 30S subunit by binding and bridging several RNA helices of the 16S rRNA. Functionally, forms an intersubunit bridge (bridge B4) with the 23S rRNA of the 50S subunit in the ribosome. The chain is Small ribosomal subunit protein uS15 from Cyanothece sp. (strain PCC 7425 / ATCC 29141).